The chain runs to 134 residues: Phosphoribosyl-ATP pyrophosphatase (134 aa).

This sequence belongs to the PRA-PH family.

It localises to the cytoplasm. It carries out the reaction 1-(5-phospho-beta-D-ribosyl)-ATP + H2O = 1-(5-phospho-beta-D-ribosyl)-5'-AMP + diphosphate + H(+). It functions in the pathway amino-acid biosynthesis; L-histidine biosynthesis; L-histidine from 5-phospho-alpha-D-ribose 1-diphosphate: step 2/9. The chain is Phosphoribosyl-ATP pyrophosphatase from Verminephrobacter eiseniae (strain EF01-2).